We begin with the raw amino-acid sequence, 339 residues long: tRNA N6-adenosine threonylcarbamoyltransferase (339 aa).

The Fe cation site is built by histidine 114 and histidine 118. Substrate-binding positions include 137 to 141 (VVSGG), aspartate 170, glycine 183, aspartate 187, and asparagine 277. Aspartate 305 provides a ligand contact to Fe cation.

This sequence belongs to the KAE1 / TsaD family. Fe(2+) serves as cofactor.

The protein resides in the cytoplasm. The catalysed reaction is L-threonylcarbamoyladenylate + adenosine(37) in tRNA = N(6)-L-threonylcarbamoyladenosine(37) in tRNA + AMP + H(+). Functionally, required for the formation of a threonylcarbamoyl group on adenosine at position 37 (t(6)A37) in tRNAs that read codons beginning with adenine. Is involved in the transfer of the threonylcarbamoyl moiety of threonylcarbamoyl-AMP (TC-AMP) to the N6 group of A37, together with TsaE and TsaB. TsaD likely plays a direct catalytic role in this reaction. The sequence is that of tRNA N6-adenosine threonylcarbamoyltransferase from Clostridium perfringens (strain ATCC 13124 / DSM 756 / JCM 1290 / NCIMB 6125 / NCTC 8237 / Type A).